We begin with the raw amino-acid sequence, 1090 residues long: Vinculin (1090 aa).

2 repeat units span residues 339-446 and 455-561. Residues 339 to 561 form a 2 X repeats region; it reads DADNVTVMRK…LKNALRDLGD (223 aa). Disordered stretches follow at residues 811–842 and 864–895; these read GVPM…SQVI and DIPA…EEET. A compositionally biased stretch (polar residues) spans 817–830; sequence GRHSSYQESISRAS. A compositionally biased stretch (pro residues) spans 866–887; sequence PAPPRPPPPVELSPPPRPPPPP.

The protein belongs to the vinculin/alpha-catenin family. In terms of assembly, may interact with sorb-1. In terms of tissue distribution, expressed in gonadal sheath cells and the spermatheca. Expressed in body wall muscles.

It localises to the cytoplasm. Its subcellular location is the cytoskeleton. It is found in the cell junction. The protein resides in the adherens junction. The protein localises to the cell membrane. It localises to the focal adhesion. Functionally, involved in cell adhesion. May be involved in the attachment of the actin-based microfilaments to the plasma membrane. Involved in ovulation. This is Vinculin from Caenorhabditis elegans.